The primary structure comprises 1033 residues: SIT4-associating protein SAP190 (1033 aa).

Disordered regions lie at residues 32-82 (DQDD…TTES), 147-213 (PEII…QVET), 768-813 (FGND…HDSG), and 828-1033 (ENEE…KEAF). Basic and acidic residues predominate over residues 158–170 (ILIERDRKDKKED). Acidic residues predominate over residues 171-182 (AEEGGDSEETTN). The segment covering 183 to 195 (DSDHDSGDERSVD) has biased composition (basic and acidic residues). Phosphoserine is present on serine 774. Acidic residues-rich tracts occupy residues 784–793 (SEDIIGDTEG) and 828–838 (ENEEDYAEYSD). Phosphoserine occurs at positions 857, 862, and 892. Over residues 858–879 (DDGKSKSAESEFTDKISEHRDG) the composition is skewed to basic and acidic residues. Residues 909–924 (SRSQPSDPKLQDQNIF) show a composition bias toward polar residues. The segment covering 932–944 (GVGDDDDYMDPND) has biased composition (acidic residues). A Phosphothreonine modification is found at threonine 990. Serine 991 carries the post-translational modification Phosphoserine. The segment covering 1000-1018 (ISSDEEDSEDEDEENDMGN) has biased composition (acidic residues).

The protein belongs to the SAPS family. In terms of assembly, associates with the SIT4 protein phosphatase catalytic subunit in a cell-cycle-dependent manner. Hyperphosphorylated in the absence of SIT4.

It localises to the cytoplasm. Positive regulator of protein phosphatase SIT4. Involved in the general amino acid control (GAAC) response regulated by TOR. Involved in the dephosphorylation of the elongator complex subunit IKI3. The chain is SIT4-associating protein SAP190 (SAP190) from Saccharomyces cerevisiae (strain Lalvin EC1118 / Prise de mousse) (Baker's yeast).